The primary structure comprises 800 residues: MVSTQQRTDDDSSQPVKASLKSYGITEPLSIAGPSAADVKRNLELEKFLVDEGLYESKEETMRREEVVVRIDQIVKHWVKQLTRQRGYTDQMVEDANAVIFTFGSYRLGVHGPMADIDTLCVGPSYVNREEDFFIFFRDILAEMEEVTELQPVTDAHVPVMKFKFQGISIDLLYASISLLVIPQDLDISNSSVLCDVDEQTVRSLNGCRVADQILKLVPNSEHFRTTLRCLKYWAKKRGVYSNVTGFLGGVNWALLVARLCQFYPNAIPSMLVSRFFRVYTQWRWPNPVMLCAIEEDDLSFPVWDPRKNHRDRYHLMPIITPAYPCMNSSYNVSQSTLRVMTEQFQFGNTICQEIELNKQHWSSLFQQYMFFEAYKNYLQVDVLAADAEDLLAWKGWVESRFRQLTLKIERDTNGMLMCHPQPNEYVDTSKQFRHCAFFMGLQRADGFGGQECQQFDIRGTVDEFRQEVNMYMFWRPGMDVHVSHVRRRQLPSFVFPNGYKRSRQSRHQSQQCREPGDEGVGSLSDSVERYAKRKNDDEIMNSRPEKREKRASCSLHTLDAASPDSSGITTSGTPQIGIVPGPRAECLVTGDLVCNVTSLPNVEVEAEKFISKITELRKFSQYEHTSGSEQILEVDSRALVQSYHDLAEPVAKHVRPDLSALLACEGGQNKEIGHDMGSESINDTDTQHLPRRLNVNEDVDEVEREAKLGEIAGGVLWNGHCGRNLDHEGFVTPANLDSAVENRNLHSDGLFKSGLPEELQSNSLLSGTGKLDDGARSESLQNEMMRHVFLQPIIGLCKS.

Residues 103–105 (FGS), 115–118 (ADID), D171, K232, Y241, and 250–251 (GV) each bind ATP. D116, D118, and D171 together coordinate Mg(2+). Short sequence motifs (nuclear localization signal) lie at residues 487 to 494 (RRRQLPSF) and 533 to 540 (KRKNDDEI). Residues 497–576 (PNGYKRSRQS…SGITTSGTPQ (80 aa)) are disordered. Residues 527–538 (SVERYAKRKNDD) show a composition bias toward basic and acidic residues. The segment covering 564–575 (PDSSGITTSGTP) has biased composition (polar residues).

The protein belongs to the poly(A) polymerase family. Monomer. Forms a complex with cleavage and polyadenylation specificity factor (CPSF) subunits CPSF100, CPSF30, FIPS5 and PABN2. Requires Mg(2+) as cofactor. The cofactor is Mn(2+). In terms of tissue distribution, mostly expressed in flowers (highly in the style, receptacle and pedicel, but weakly in the vasculature of sepals) and hypocotyls, and, to a lower extent, in roots and stems. Barely detected in leaves (petioles and vascular system).

The protein resides in the nucleus. It localises to the cytoplasm. It catalyses the reaction RNA(n) + ATP = RNA(n)-3'-adenine ribonucleotide + diphosphate. In terms of biological role, essential protein. Polymerase that creates the 3'-poly(A) tail of mRNA's. Also required for the endoribonucleolytic cleavage reaction at some polyadenylation sites. May acquire specificity through interaction with a cleavage and polyadenylation specificity factor (CPSF) at its C-terminus. Mediates the polyadenylation of RNAs that are associated with polynucleotide phosphorylase (e.g. PNP1). This Arabidopsis thaliana (Mouse-ear cress) protein is Nuclear poly(A) polymerase 2.